The following is a 305-amino-acid chain: UDP-3-O-acyl-N-acetylglucosamine deacetylase (305 aa).

Residues H78, H237, and D241 each contribute to the Zn(2+) site. H264 (proton donor) is an active-site residue.

The protein belongs to the LpxC family. Requires Zn(2+) as cofactor.

The catalysed reaction is a UDP-3-O-[(3R)-3-hydroxyacyl]-N-acetyl-alpha-D-glucosamine + H2O = a UDP-3-O-[(3R)-3-hydroxyacyl]-alpha-D-glucosamine + acetate. It functions in the pathway glycolipid biosynthesis; lipid IV(A) biosynthesis; lipid IV(A) from (3R)-3-hydroxytetradecanoyl-[acyl-carrier-protein] and UDP-N-acetyl-alpha-D-glucosamine: step 2/6. Catalyzes the hydrolysis of UDP-3-O-myristoyl-N-acetylglucosamine to form UDP-3-O-myristoylglucosamine and acetate, the committed step in lipid A biosynthesis. The sequence is that of UDP-3-O-acyl-N-acetylglucosamine deacetylase from Burkholderia ambifaria (strain MC40-6).